The following is a 148-amino-acid chain: Probable histone H2B.1 (148 aa).

The segment covering 1–32 (MAPKGEKKPAEKKPAEEKKSTVAEKAPAEKKP) has biased composition (basic and acidic residues). The disordered stretch occupies residues 1-57 (MAPKGEKKPAEKKPAEEKKSTVAEKAPAEKKPKAGKKLPKEGGSAAGEKKKKRSKKS). Lys-7, Lys-36, and Lys-37 each carry N6-acetyllysine. Residue Lys-144 forms a Glycyl lysine isopeptide (Lys-Gly) (interchain with G-Cter in ubiquitin) linkage.

It belongs to the histone H2B family. In terms of assembly, the nucleosome is a histone octamer containing two molecules each of H2A, H2B, H3 and H4 assembled in one H3-H4 heterotetramer and two H2A-H2B heterodimers. The octamer wraps approximately 147 bp of DNA. Can be acetylated to form H2BK6ac, H2BK33ac and H2BK34ac. In terms of processing, monoubiquitinated to form H2BK143ub1; may give a specific tag for epigenetic transcriptional activation.

The protein localises to the nucleus. The protein resides in the chromosome. Its function is as follows. Core component of nucleosome. Nucleosomes wrap and compact DNA into chromatin, limiting DNA accessibility to the cellular machineries which require DNA as a template. Histones thereby play a central role in transcription regulation, DNA repair, DNA replication and chromosomal stability. DNA accessibility is regulated via a complex set of post-translational modifications of histones, also called histone code, and nucleosome remodeling. The chain is Probable histone H2B.1 from Medicago truncatula (Barrel medic).